The following is a 303-amino-acid chain: Diaminopimelate epimerase (303 aa).

Substrate-binding residues include Asn15, Gln47, and Asn67. The active-site Proton donor is the Cys76. Substrate-binding positions include 77–78 (GN), Asn163, Asn197, and 215–216 (ER). The Proton acceptor role is filled by Cys224. A substrate-binding site is contributed by 225 to 226 (GS). The disordered stretch occupies residues 278–303 (FDPATGEWSRDTQGLQGSGNADRGAA).

Belongs to the diaminopimelate epimerase family. In terms of assembly, homodimer.

Its subcellular location is the cytoplasm. The enzyme catalyses (2S,6S)-2,6-diaminopimelate = meso-2,6-diaminopimelate. It participates in amino-acid biosynthesis; L-lysine biosynthesis via DAP pathway; DL-2,6-diaminopimelate from LL-2,6-diaminopimelate: step 1/1. Its function is as follows. Catalyzes the stereoinversion of LL-2,6-diaminopimelate (L,L-DAP) to meso-diaminopimelate (meso-DAP), a precursor of L-lysine and an essential component of the bacterial peptidoglycan. This is Diaminopimelate epimerase from Brucella melitensis biotype 1 (strain ATCC 23456 / CCUG 17765 / NCTC 10094 / 16M).